The following is a 337-amino-acid chain: Inositol 2-dehydrogenase (337 aa).

It belongs to the Gfo/Idh/MocA family. As to quaternary structure, homotetramer.

The enzyme catalyses myo-inositol + NAD(+) = scyllo-inosose + NADH + H(+). Involved in the oxidation of myo-inositol (MI) to 2-keto-myo-inositol (2KMI or 2-inosose). The protein is Inositol 2-dehydrogenase of Corynebacterium glutamicum (strain ATCC 13032 / DSM 20300 / JCM 1318 / BCRC 11384 / CCUG 27702 / LMG 3730 / NBRC 12168 / NCIMB 10025 / NRRL B-2784 / 534).